Reading from the N-terminus, the 31-residue chain is Ranatuerin-2PL (31 aa).

Residues Cys23 and Cys29 are joined by a disulfide bond.

In terms of tissue distribution, expressed by the skin glands.

The protein localises to the secreted. Antimicrobial activity against Gram-negative bacterium E.coli. The protein is Ranatuerin-2PL of Lithobates palustris (Pickerel frog).